Here is a 316-residue protein sequence, read N- to C-terminus: Probable cell division protein WhiA (316 aa).

Residues 275-309 (TLKELGEMVSGGKISKSGINHRLRKIDDIAEKLRA) constitute a DNA-binding region (H-T-H motif).

The protein belongs to the WhiA family.

Functionally, involved in cell division and chromosome segregation. In Bacillus anthracis (strain CDC 684 / NRRL 3495), this protein is Probable cell division protein WhiA.